The sequence spans 645 residues: Rab11 family-interacting protein 5 (645 aa).

One can recognise a C2 domain in the interval 1–146 (MALVRDPEPA…AGRAQHTQWY (146 aa)). Ser176, Ser283, Ser286, Ser307, Ser357, and Ser367 each carry phosphoserine. The tract at residues 271 to 299 (GAELLTRSPSHSSWLSTEGGRDSIQSPKL) is disordered. Residues 277 to 286 (RSPSHSSWLS) show a composition bias toward polar residues. Residues 341–550 (SHVYNEEPQP…STALSSGLER (210 aa)) are disordered. The span at 357–374 (SISGPFPPSSSLHSVPPR) shows a compositional bias: low complexity. The segment covering 375–387 (SSEEGSRSSDDSW) has biased composition (basic and acidic residues). Phosphoserine is present on residues Ser391 and Ser395. A compositionally biased stretch (basic residues) spans 452–463 (RMGLFHHHHHQG). Phosphoserine occurs at positions 486, 530, 539, 545, and 640. Positions 578–640 (KDSAVLDQSA…ETSPTLLQIS (63 aa)) constitute an FIP-RBD domain.

Interacts with RAB11FIP4. Interacts with NAPG. Interacts with RO60. Interacts with RAB11A that has been activated by GTP binding. In terms of processing, phosphorylated on serine and threonine residues. Phosphorylation at Ser-357 is PKA-dependent.

Its subcellular location is the cytoplasm. It localises to the recycling endosome membrane. The protein resides in the early endosome membrane. It is found in the golgi apparatus membrane. The protein localises to the cytoplasmic vesicle. Its subcellular location is the secretory vesicle membrane. It localises to the mitochondrion membrane. Rab effector involved in protein trafficking from apical recycling endosomes to the apical plasma membrane. Involved in insulin granule exocytosis. May regulate V-ATPase intracellular transport in response to extracellular acidosis. This Mus musculus (Mouse) protein is Rab11 family-interacting protein 5.